The chain runs to 412 residues: Polyferredoxin protein MvhB (412 aa).

12 consecutive 4Fe-4S ferredoxin-type domains span residues 2-29 (IIVNKEDCIRCGACQGTCPTAAIEVTPE), 30-57 (DVIYCDICGGEPKCVDICPTGALKLEDL), 67-96 (GRIVFNPDKCNECGDCVEVCPPQILKLDEG), 97-127 (KVKKVPLQGFCVMCQKCVDICPVGVIGVEGI), 138-166 (EGPIFIADCVGCGMCVPECPVDAITLDKV), 168-197 (GVIEIDEDTCIKCGVCAQTCPWNAVYISGR), 207-236 (KKFELDEDACIGCNTCVEACPGDFIVPRTS), 238-266 (LTVELPAICTACGLCEQLCPVDAIDLEVE), 276-305 (EGLVWDEEKCDFIGACANICPNDAIRVVTK), 314-345 (EKVDEEPSFAMCTRCGACTVACPKGALSLVDM), 357-386 (KRVQYNPALCDQCGDCIEACPYDMLKLTDE), and 385-412 (DEKVPLKGFCILCDQCIPACPKGALSLK). Positions 9, 12, 15, and 19 each coordinate [4Fe-4S] cluster. Cys-76, Cys-79, Cys-82, Cys-86, Cys-107, Cys-110, Cys-113, Cys-117, Cys-146, Cys-149, Cys-152, Cys-156, Cys-177, Cys-180, Cys-183, Cys-187, Cys-216, Cys-219, Cys-222, Cys-226, Cys-246, Cys-249, Cys-252, and Cys-256 together coordinate [4Fe-4S] cluster. Positions 325, 328, 331, 335, 366, 369, 372, 376, 394, 397, 400, and 404 each coordinate [4Fe-4S] cluster.

The cofactor is [4Fe-4S] cluster.

The sequence is that of Polyferredoxin protein MvhB (mvhB) from Methanothermobacter thermautotrophicus (strain ATCC 29096 / DSM 1053 / JCM 10044 / NBRC 100330 / Delta H) (Methanobacterium thermoautotrophicum).